The primary structure comprises 312 residues: MPFCLTETSLPFGKKYKGKVRDTYDLGDQLILVTTDRQSAFDRCLAAVPYKGQVLNLTSVWWFKNTQSIVPNHLIAVPDPNVAIAKKCKIFPIEFVVRGYISGSTSTSLWTQYQKGVREYCGITFPDGLRKNQKLESPVITPTTKETLHDRPISPHEIVAEGWMTQEDWDETSSYALKLFQHGMEVAQQHGLILVDTKYEFGRDAEGRIVLVDEIHTPDSSRYWLFNGYQERFDAGKEPENIDKEFLRLWFVDHCDPYKDEVLPQAPQELIVTLASRYIQLYEMITGESFVYDSNPGPVNDRILHNIQRWLG.

This sequence belongs to the SAICAR synthetase family.

The enzyme catalyses 5-amino-1-(5-phospho-D-ribosyl)imidazole-4-carboxylate + L-aspartate + ATP = (2S)-2-[5-amino-1-(5-phospho-beta-D-ribosyl)imidazole-4-carboxamido]succinate + ADP + phosphate + 2 H(+). Its pathway is purine metabolism; IMP biosynthesis via de novo pathway; 5-amino-1-(5-phospho-D-ribosyl)imidazole-4-carboxamide from 5-amino-1-(5-phospho-D-ribosyl)imidazole-4-carboxylate: step 1/2. The chain is Phosphoribosylaminoimidazole-succinocarboxamide synthase from Legionella pneumophila (strain Paris).